Here is a 370-residue protein sequence, read N- to C-terminus: CCA-adding enzyme (370 aa).

ATP contacts are provided by Gly8 and Arg11. CTP contacts are provided by Gly8 and Arg11. Residues Asp21 and Asp23 each contribute to the Mg(2+) site. 3 residues coordinate ATP: Arg91, Arg137, and Arg140. CTP is bound by residues Arg91, Arg137, and Arg140.

It belongs to the tRNA nucleotidyltransferase/poly(A) polymerase family. Bacterial CCA-adding enzyme type 2 subfamily. Mg(2+) is required as a cofactor.

It catalyses the reaction a tRNA precursor + 2 CTP + ATP = a tRNA with a 3' CCA end + 3 diphosphate. The catalysed reaction is a tRNA with a 3' CCA end + 2 CTP + ATP = a tRNA with a 3' CCACCA end + 3 diphosphate. Functionally, catalyzes the addition and repair of the essential 3'-terminal CCA sequence in tRNAs without using a nucleic acid template. Adds these three nucleotides in the order of C, C, and A to the tRNA nucleotide-73, using CTP and ATP as substrates and producing inorganic pyrophosphate. tRNA 3'-terminal CCA addition is required both for tRNA processing and repair. Also involved in tRNA surveillance by mediating tandem CCA addition to generate a CCACCA at the 3' terminus of unstable tRNAs. While stable tRNAs receive only 3'-terminal CCA, unstable tRNAs are marked with CCACCA and rapidly degraded. In Pseudomonas putida (strain W619), this protein is CCA-adding enzyme.